Here is a 469-residue protein sequence, read N- to C-terminus: Adenosylhomocysteinase (469 aa).

Thr-63, Asp-139, and Glu-164 together coordinate substrate. 165 to 167 (TTT) is a binding site for NAD(+). 2 residues coordinate substrate: Lys-194 and Asp-198. Residues Asn-199, 228-233 (GYGDVG), Glu-251, Asn-300, 321-323 (IGH), and Asn-375 contribute to the NAD(+) site.

This sequence belongs to the adenosylhomocysteinase family. Requires NAD(+) as cofactor.

The protein localises to the cytoplasm. The catalysed reaction is S-adenosyl-L-homocysteine + H2O = L-homocysteine + adenosine. It functions in the pathway amino-acid biosynthesis; L-homocysteine biosynthesis; L-homocysteine from S-adenosyl-L-homocysteine: step 1/1. In terms of biological role, may play a key role in the regulation of the intracellular concentration of adenosylhomocysteine. In Pseudomonas putida (strain W619), this protein is Adenosylhomocysteinase.